Reading from the N-terminus, the 95-residue chain is ESAT-6-like protein EsxA (95 aa).

It belongs to the WXG100 family. ESAT-6 subfamily. In terms of assembly, forms a tight 1:1 complex with EsxB. An artificial EsxA-EsxB heterodimer interacts with EspA.

It localises to the secreted. In terms of biological role, an exported protein. Unlike its M.tuberculosis counterpart has poor pore forming ability in artificial liposomes, does not undergo conformational change at acidic pH. Mutation of 2 residues to those found in M.tuberculosis (25-TA-26 to IH) alters the properties of this protein so that it inserts into liposomes at acidic pH, forming pores, like its M.tuberculosis counterpart. This Mycolicibacterium smegmatis (strain ATCC 700084 / mc(2)155) (Mycobacterium smegmatis) protein is ESAT-6-like protein EsxA.